The following is a 536-amino-acid chain: uncharacterized protein (536 aa).

Residues 163-394 (LDAYDSMSVQ…MNFIPTRPLE (232 aa)) form the Radical SAM core domain. Residues Cys-177, Cys-181, and Cys-184 each coordinate [4Fe-4S] cluster.

It depends on [4Fe-4S] cluster as a cofactor.

This is an uncharacterized protein from Synechocystis sp. (strain ATCC 27184 / PCC 6803 / Kazusa).